We begin with the raw amino-acid sequence, 528 residues long: Ribonuclease Y (528 aa).

Residues 15–35 (SLFFLALICGSIIGYFLYSFF) traverse the membrane as a helical segment. The KH domain maps to 217-277 (NISVVNIPNE…IRREIAKKTL (61 aa)). Residues 343 to 436 (VLKHSLEVAF…VAIADTLSSA (94 aa)) enclose the HD domain.

This sequence belongs to the RNase Y family.

The protein resides in the cell membrane. In terms of biological role, endoribonuclease that initiates mRNA decay. This Aster yellows witches'-broom phytoplasma (strain AYWB) protein is Ribonuclease Y.